We begin with the raw amino-acid sequence, 106 residues long: Nucleoid-associated protein RPD_0086 (106 aa).

It belongs to the YbaB/EbfC family. Homodimer.

The protein localises to the cytoplasm. It localises to the nucleoid. In terms of biological role, binds to DNA and alters its conformation. May be involved in regulation of gene expression, nucleoid organization and DNA protection. The sequence is that of Nucleoid-associated protein RPD_0086 from Rhodopseudomonas palustris (strain BisB5).